The sequence spans 681 residues: Calpain-C (681 aa).

Positions 18 to 331 (LWEDPDFPAV…FSTMEVVYLD (314 aa)) constitute a Calpain catalytic domain. Positions 332–481 (TETSNDEEML…ILGTGSFRLS (150 aa)) are domain III. Residues 482–514 (CLETQTMILLDPFPALKSTDAERCGGPKVKSVC) are linker. The tract at residues 515–681 (QYEPVYMQLA…HDWIKSILSC (167 aa)) is domain IV. An EF-hand domain is found at 552–587 (ANIDICRQVIALQDRSGSGRITFQQFKTFMVNLKSW). Residues D565, S567, S569, and R571 each coordinate Ca(2+).

This sequence belongs to the peptidase C2 family. Localized to the salivary glands in the larva.

It is found in the cytoplasm. In terms of biological role, not known; does not seem to have protease activity. This Drosophila melanogaster (Fruit fly) protein is Calpain-C.